The chain runs to 190 residues: Vascular endothelial growth factor A (190 aa).

An N-terminal signal peptide occupies residues M1–A26. Cystine bridges form between C51–C93, C82–C127, and C86–C129. N100 carries an N-linked (GlcNAc...) asparagine glycan.

This sequence belongs to the PDGF/VEGF growth factor family. Homodimer; disulfide-linked. Also found as heterodimer with PGF. Interacts with NRP1. Interacts with isoform 2 of BSG. Interacts with CD82; this interaction inhibits VEGFA-mediated signaling pathway.

Its subcellular location is the secreted. In terms of biological role, growth factor active in angiogenesis, vasculogenesis and endothelial cell growth. Induces endothelial cell proliferation, promotes cell migration, inhibits apoptosis and induces permeabilization of blood vessels. Binds to the FLT1/VEGFR1 and KDR/VEGFR2 receptors, heparan sulfate and heparin. Binding to NRP1 receptor initiates a signaling pathway needed for motor neuron axon guidance and cell body migration, including for the caudal migration of facial motor neurons from rhombomere 4 to rhombomere 6 during embryonic development. Also binds the DEAR/FBXW7-AS1 receptor. The sequence is that of Vascular endothelial growth factor A (VEGFA) from Mesocricetus auratus (Golden hamster).